The primary structure comprises 549 residues: Glucose-6-phosphate isomerase (549 aa).

N6-acetyllysine occurs at positions 80, 228, and 234. Catalysis depends on E355, which acts as the Proton donor. Residues H386 and K514 contribute to the active site.

This sequence belongs to the GPI family.

The protein localises to the cytoplasm. The catalysed reaction is alpha-D-glucose 6-phosphate = beta-D-fructose 6-phosphate. It functions in the pathway carbohydrate biosynthesis; gluconeogenesis. Its pathway is carbohydrate degradation; glycolysis; D-glyceraldehyde 3-phosphate and glycerone phosphate from D-glucose: step 2/4. Its function is as follows. Catalyzes the reversible isomerization of glucose-6-phosphate to fructose-6-phosphate. This Shigella boydii serotype 4 (strain Sb227) protein is Glucose-6-phosphate isomerase.